The chain runs to 400 residues: Tryptophan--tRNA ligase, cytoplasmic (400 aa).

Residues 95 to 104 carry the 'HIGH' region motif; the sequence is PSSGSLHFGH. Positions 281-285 match the 'KMSKS' region motif; the sequence is KMSAS.

It belongs to the class-I aminoacyl-tRNA synthetase family.

It localises to the cytoplasm. It catalyses the reaction tRNA(Trp) + L-tryptophan + ATP = L-tryptophyl-tRNA(Trp) + AMP + diphosphate + H(+). The sequence is that of Tryptophan--tRNA ligase, cytoplasmic (trpS) from Dictyostelium discoideum (Social amoeba).